Here is a 615-residue protein sequence, read N- to C-terminus: Lipoprotein LpqB (615 aa).

The signal sequence occupies residues 1–29 (MGADRGRGGRRRPARVVAYAVGGVVLLAG). Cys30 carries the N-palmitoyl cysteine lipid modification. Cys30 carries S-diacylglycerol cysteine lipidation. The segment at 100–123 (PDESATVLAGGPGTESDHSGNRED) is disordered. The span at 114 to 123 (ESDHSGNRED) shows a compositional bias: basic and acidic residues.

The protein belongs to the LpqB lipoprotein family.

Its subcellular location is the cell membrane. The protein is Lipoprotein LpqB of Streptomyces coelicolor (strain ATCC BAA-471 / A3(2) / M145).